The sequence spans 175 residues: Cytochrome c homolog (175 aa).

The Cytoplasmic segment spans residues 1 to 8 (MTGKELNK). Residues 9-29 (IVAAILFASLIAMIVGFIANI) form a helical; Signal-anchor membrane-spanning segment. Residues 30-175 (LYKPNLHVLH…LFLKNYVHDQ (146 aa)) lie on the Periplasmic side of the membrane. Heme c contacts are provided by Cys-84, Cys-87, His-88, and Met-150.

It belongs to the cytochrome c family. In terms of processing, binds 1 heme c group covalently per subunit.

It is found in the cell membrane. In terms of biological role, may be involved in electron transfer from bc1 complex to aa3. This Rickettsia prowazekii (strain Madrid E) protein is Cytochrome c homolog (cycM).